The sequence spans 216 residues: Cytochrome c-type protein Cgr1 (216 aa).

A helical transmembrane segment spans residues 18-38 (WPIVVGVVVVVLIAAGAGFWV). Heme-binding residues include Cys-46, Cys-50, His-51, Cys-95, Cys-98, His-99, Cys-142, Cys-147, His-148, Cys-176, Cys-179, His-180, Cys-190, Cys-193, and His-194.

It belongs to the multiheme cytochrome c family. May form a membrane-associated complex with Cgr2. In terms of processing, binds 5 heme groups per subunit.

It is found in the cell membrane. Functionally, probably transfers electrons from a membrane-associated electron donor (e.g. the membrane quinone pool) to the [4Fe-4S] cluster of the Cgr2 reductase via its covalently bound heme groups. This is Cytochrome c-type protein Cgr1 from Eggerthella lenta (strain ATCC 25559 / DSM 2243 / CCUG 17323 / JCM 9979 / KCTC 3265 / NCTC 11813 / VPI 0255 / 1899 B) (Eubacterium lentum).